A 283-amino-acid polypeptide reads, in one-letter code: Pseudokinase OPG198 (283 aa).

ATP is bound by residues Met1 and Lys30. A Protein kinase domain is found at 1–283; it reads MESFKYCFDN…DRLRRLFIQD (283 aa).

The protein belongs to the protein kinase superfamily. Ser/Thr protein kinase family. Poxviruses subfamily. In terms of assembly, interacts with B1/VPK1. Interacts with host VRK1. Interacts with host VRK2.

It is found in the host nucleus. With respect to regulation, both catalytically active kinases B1/VPK1 and host VRK2 repress B12 inhibitory activity in a B1/VPK1 deletion mutant strain. In terms of biological role, pseudokinase that plays a role in viral DNA replication repression by activating the antiviral protein BANF1 and inhibiting the activity of host VRK1, a cellular modulator of BANF1. This Vaccinia virus (strain Ankara) (VACV) protein is Pseudokinase OPG198 (OPG198).